A 125-amino-acid chain; its full sequence is Large ribosomal subunit protein uL18 (125 aa).

It belongs to the universal ribosomal protein uL18 family. In terms of assembly, part of the 50S ribosomal subunit; part of the 5S rRNA/L5/L18/L25 subcomplex. Contacts the 5S and 23S rRNAs.

In terms of biological role, this is one of the proteins that bind and probably mediate the attachment of the 5S RNA into the large ribosomal subunit, where it forms part of the central protuberance. The sequence is that of Large ribosomal subunit protein uL18 from Anaplasma marginale (strain Florida).